We begin with the raw amino-acid sequence, 288 residues long: Probable ketoamine kinase SAOUHSC_02908 (288 aa).

86–88 is a binding site for ATP; the sequence is TYL. Asp191 functions as the Proton acceptor in the catalytic mechanism.

It belongs to the fructosamine kinase family.

It carries out the reaction N(6)-(D-ribulosyl)-L-lysine + ATP = N(6)-(3-O-phospho-D-ribulosyl)-L-lysine + ADP + H(+). It catalyses the reaction N(6)-(D-erythrulosyl)-L-lysine + ATP = N(6)-(3-O-phospho-D-erythrulosyl)-L-lysine + ADP + H(+). The catalysed reaction is N(6)-D-ribulosyl-L-lysyl-[protein] + ATP = N(6)-(3-O-phospho-D-ribulosyl)-L-lysyl-[protein] + ADP + H(+). The enzyme catalyses N(6)-(D-erythrulosyl)-L-lysyl-[protein] + ATP = N(6)-(3-O-phospho-D-erythrulosyl)-L-lysyl-[protein] + ADP + H(+). Its function is as follows. Ketoamine kinase that phosphorylates ketoamines, such as erythruloselysine and ribuloselysine, on the third carbon of the sugar moiety to generate ketoamine 3-phosphate. Has higher activity on free lysine (erythruloselysine and ribuloselysine), than on ribuloselysine and erythruloselysine residues on glycated proteins. This chain is Probable ketoamine kinase SAOUHSC_02908, found in Staphylococcus aureus (strain NCTC 8325 / PS 47).